Consider the following 109-residue polypeptide: Large ribosomal subunit protein uL24 (109 aa).

Belongs to the universal ribosomal protein uL24 family. In terms of assembly, part of the 50S ribosomal subunit.

Its function is as follows. One of two assembly initiator proteins, it binds directly to the 5'-end of the 23S rRNA, where it nucleates assembly of the 50S subunit. In terms of biological role, one of the proteins that surrounds the polypeptide exit tunnel on the outside of the subunit. The sequence is that of Large ribosomal subunit protein uL24 from Desulforapulum autotrophicum (strain ATCC 43914 / DSM 3382 / VKM B-1955 / HRM2) (Desulfobacterium autotrophicum).